The primary structure comprises 451 residues: Methionine aminopeptidase 2-2 (451 aa).

A disordered region spans residues 1–97; the sequence is MAAQVEDDVA…PRVLISDLFP (97 aa). Positions 19 to 28 are enriched in polar residues; that stretch reads TKPTNGTSQP. A compositionally biased stretch (acidic residues) spans 35–45; it reads EAEDSDDDAEG. Over residues 60–73 the composition is skewed to basic residues; sequence KKKKKRKPRKKKKA. The segment covering 74 to 83 has biased composition (low complexity); the sequence is GTSATAGAKS. Substrate is bound at residue His-204. 3 residues coordinate a divalent metal cation: Asp-224, Asp-235, and His-304. His-312 serves as a coordination point for substrate. The a divalent metal cation site is built by Glu-337 and Glu-432.

It belongs to the peptidase M24A family. Methionine aminopeptidase eukaryotic type 2 subfamily. Co(2+) serves as cofactor. Zn(2+) is required as a cofactor. The cofactor is Mn(2+). It depends on Fe(2+) as a cofactor.

Its subcellular location is the cytoplasm. The catalysed reaction is Release of N-terminal amino acids, preferentially methionine, from peptides and arylamides.. Its function is as follows. Cotranslationally removes the N-terminal methionine from nascent proteins. The N-terminal methionine is often cleaved when the second residue in the primary sequence is small and uncharged (Met-Ala-, Cys, Gly, Pro, Ser, Thr, or Val). This chain is Methionine aminopeptidase 2-2, found in Leptosphaeria maculans (strain JN3 / isolate v23.1.3 / race Av1-4-5-6-7-8) (Blackleg fungus).